The chain runs to 564 residues: Acetylcholine receptor subunit alpha-type deg-3 (564 aa).

The N-terminal stretch at 1 to 20 (MTLKIRTIIILFCVISVTTT) is a signal peptide. The Extracellular segment spans residues 21-268 (SQSLNATLKT…SLVIQRKPLY (248 aa)). 4 N-linked (GlcNAc...) asparagine glycosylation sites follow: Asn25, Asn37, Asn125, and Asn198. 2 cysteine pairs are disulfide-bonded: Cys185–Cys199 and Cys248–Cys249. The next 3 helical transmembrane spans lie at 269 to 289 (YLVN…TGFF), 302 to 319 (INLG…MLMV), and 329 to 353 (FVPL…LTSV). Residues 354–526 (VLSVQGRRQY…WEFLATVLDR (173 aa)) lie on the Cytoplasmic side of the membrane. The helical transmembrane segment at 527-547 (FLLIVFVGAVVIVTAGLILVG) threads the bilayer.

This sequence belongs to the ligand-gated ion channel (TC 1.A.9) family. Acetylcholine receptor (TC 1.A.9.1) subfamily. The functional receptor is a heteromer of deg-3 and des-2. Interacts with ric-3; which is required for proper receptor folding.

It localises to the postsynaptic cell membrane. It is found in the cell membrane. Subunit of the non-synaptic neuronal acetylcholine receptor, which may play a role in chemotaxis towards choline. After binding choline or acetylcholine, the AChR responds by an extensive change in conformation that affects all subunits and leads to opening of an ion-conducting channel across the plasma membrane. This chain is Acetylcholine receptor subunit alpha-type deg-3 (deg-3), found in Caenorhabditis elegans.